A 375-amino-acid polypeptide reads, in one-letter code: Saccharopine dehydrogenase [NAD(+), L-lysine-forming] (375 aa).

2 residues coordinate L-saccharopine: Arg18 and Lys78. The Proton acceptor role is filled by Lys78. His96 (proton donor) is an active-site residue. Position 101 (Gln101) interacts with L-saccharopine. An NAD(+)-binding site is contributed by Arg130. The L-saccharopine site is built by Arg131 and Phe135. NAD(+)-binding positions include 203 to 204 (GR), Asp227, Thr231, Tyr252, and Val279. A disulfide bond links Cys205 and Cys250. 280–282 (SAD) contributes to the L-saccharopine binding site. 322 to 325 (IDHL) provides a ligand contact to NAD(+).

It belongs to the AlaDH/PNT family. In terms of assembly, monomer.

The catalysed reaction is L-saccharopine + NAD(+) + H2O = L-lysine + 2-oxoglutarate + NADH + H(+). The protein operates within amino-acid biosynthesis; L-lysine biosynthesis via AAA pathway; L-lysine from L-alpha-aminoadipate (fungal route): step 3/3. Functionally, catalyzes the NAD(+)-dependent cleavage of saccharopine to L-lysine and 2-oxoglutarate, the final step in the alpha-aminoadipate (AAA) pathway for lysin biosynthesis. This chain is Saccharopine dehydrogenase [NAD(+), L-lysine-forming], found in Emericella nidulans (strain FGSC A4 / ATCC 38163 / CBS 112.46 / NRRL 194 / M139) (Aspergillus nidulans).